Consider the following 563-residue polypeptide: Adenine deaminase (563 aa).

This sequence belongs to the metallo-dependent hydrolases superfamily. Adenine deaminase family. The cofactor is Mn(2+).

It carries out the reaction adenine + H2O + H(+) = hypoxanthine + NH4(+). This chain is Adenine deaminase, found in Lactiplantibacillus plantarum (strain ATCC BAA-793 / NCIMB 8826 / WCFS1) (Lactobacillus plantarum).